Here is a 156-residue protein sequence, read N- to C-terminus: Small ribosomal subunit protein uS7c (156 aa).

Belongs to the universal ribosomal protein uS7 family. In terms of assembly, part of the 30S ribosomal subunit.

The protein localises to the plastid. It is found in the chloroplast. Its function is as follows. One of the primary rRNA binding proteins, it binds directly to 16S rRNA where it nucleates assembly of the head domain of the 30S subunit. This chain is Small ribosomal subunit protein uS7c (rps7), found in Cycas revoluta (Sago palm).